The following is a 233-amino-acid chain: Bcl-2-like protein 1 (233 aa).

Residues 4–24 carry the BH4 motif; that stretch reads SNRELVVDFLSYKLSQKGYSW. The interval 27-73 is disordered; the sequence is FSDVEENRTEAPEETEPERETPSAINGNPSWHLADSPAVNGATGHSS. The residue at position 49 (Ser49) is a Phosphoserine; by PLK3. Ser62 carries the phosphoserine; by CDK1 modification. The BH3 motif lies at 86-100; that stretch reads VKQALREAGDEFELR. Residues 129 to 148 carry the BH1 motif; that stretch reads ELFRDGVNWGRIVAFFSFGG. Residues 180–195 carry the BH2 motif; the sequence is PWIQENGGWDTFVDLY. Residues 210-226 form a helical membrane-spanning segment; the sequence is FNRWFLTGMTVAGVVLL.

This sequence belongs to the Bcl-2 family. Homodimer. Interacts with BCL2L11. Interacts with BAD. Interacts with PGAM5. Interacts with HEBP2. Interacts with p53/TP53 and BBC3; interaction with BBC3 disrupts the interaction with p53/TP53. Interacts with ATP5F1A and ATP5F1B; the interactions mediate the association of isoform Bcl-X(L) with the mitochondrial membrane ATP synthase F(1)F(0) ATP synthase. Interacts with VDAC1. Interacts with BCL2L11 (via BH3). Interacts with RNF183. Interacts with GIMAP3/IAN4 and GIMAP5/IAN5. Interacts with GIMAP5 and HSPA8/HSC70; the interaction between HSPA8 and BCL2L1 is impaired in the absence of GIMAP5. Interacts with isoform 4 of CLU; this interaction releases and activates BAX and promotes cell death. As to quaternary structure, forms heterodimers with BAX, BAK or BCL2; heterodimerization with BAX does not seem to be required for anti-apoptotic activity. Interacts with isoform 1 of SIVA1; the interaction inhibits the anti-apoptotic activity. Interacts with IKZF3. Interacts with RTL10/BOP. Interacts with DNM1L and CLTA; DNM1L and BCL2L1 isoform BCL-X(L) may form a complex in synaptic vesicles that also contains clathrin and MFF. Interacts (via the loop between motifs BH4 and BH3) with NLRP1 (via LRR repeats), but not with NLRP2, NLRP3, NLRP4, PYCARD, nor MEFV. Interacts with BECN1. Proteolytically cleaved by caspases during apoptosis. The cleaved protein, lacking the BH4 motif, has pro-apoptotic activity. Post-translationally, phosphorylated on Ser-62 by CDK1. This phosphorylation is partial in normal mitotic cells, but complete in G2-arrested cells upon DNA-damage, thus promoting subsequent apoptosis probably by triggering caspases-mediated proteolysis. Phosphorylated by PLK3, leading to regulate the G2 checkpoint and progression to cytokinesis during mitosis. Phosphorylation at Ser-49 appears during the S phase and G2, disappears rapidly in early mitosis during prometaphase, metaphase and early anaphase, and re-appears during telophase and cytokinesis. In terms of processing, ubiquitinated by RNF183 during prolonged ER stress, leading to degradation by the proteosome. Expressed in most tissues. Bcl-X(beta) is specifically expressed in cerebellum, heart, and thymus. In the ovary, the predominant form is Bcl-X(L), with a small but detectable level of Bcl-X(S).

It is found in the mitochondrion inner membrane. The protein resides in the mitochondrion outer membrane. The protein localises to the mitochondrion matrix. It localises to the cytoplasmic vesicle. Its subcellular location is the secretory vesicle. It is found in the synaptic vesicle membrane. The protein resides in the cytoplasm. The protein localises to the cytosol. It localises to the cytoskeleton. Its subcellular location is the microtubule organizing center. It is found in the centrosome. The protein resides in the nucleus membrane. In terms of biological role, potent inhibitor of cell death. Inhibits activation of caspases. Appears to regulate cell death by blocking the voltage-dependent anion channel (VDAC) by binding to it and preventing the release of the caspase activator, CYC1, from the mitochondrial membrane. Also acts as a regulator of G2 checkpoint and progression to cytokinesis during mitosis. Functionally, isoform Bcl-X(L) also regulates presynaptic plasticity, including neurotransmitter release and recovery, number of axonal mitochondria as well as size and number of synaptic vesicle clusters. During synaptic stimulation, increases ATP availability from mitochondria through regulation of mitochondrial membrane ATP synthase F(1)F(0) activity and regulates endocytic vesicle retrieval in hippocampal neurons through association with DMN1L and stimulation of its GTPase activity in synaptic vesicles. May attenuate inflammation impairing NLRP1-inflammasome activation, hence CASP1 activation and IL1B release. Isoform Bcl-X(S) promotes apoptosis. In Rattus norvegicus (Rat), this protein is Bcl-2-like protein 1 (Bcl2l1).